The sequence spans 332 residues: Ribosomal RNA small subunit methyltransferase C (332 aa).

The protein belongs to the methyltransferase superfamily. RsmC family. In terms of assembly, monomer.

It is found in the cytoplasm. The catalysed reaction is guanosine(1207) in 16S rRNA + S-adenosyl-L-methionine = N(2)-methylguanosine(1207) in 16S rRNA + S-adenosyl-L-homocysteine + H(+). In terms of biological role, specifically methylates the guanine in position 1207 of 16S rRNA in the 30S particle. The polypeptide is Ribosomal RNA small subunit methyltransferase C (Pseudomonas syringae pv. tomato (strain ATCC BAA-871 / DC3000)).